A 301-amino-acid chain; its full sequence is Ribonuclease HIII (301 aa).

Positions 88–301 (WSVLGSDEVG…TQKARQLARQ (214 aa)) constitute an RNase H type-2 domain. 3 residues coordinate a divalent metal cation: aspartate 94, glutamate 95, and aspartate 197.

Belongs to the RNase HII family. RnhC subfamily. Mn(2+) serves as cofactor. Requires Mg(2+) as cofactor.

The protein localises to the cytoplasm. The enzyme catalyses Endonucleolytic cleavage to 5'-phosphomonoester.. In terms of biological role, endonuclease that specifically degrades the RNA of RNA-DNA hybrids. The sequence is that of Ribonuclease HIII from Limosilactobacillus fermentum (strain NBRC 3956 / LMG 18251) (Lactobacillus fermentum).